The following is a 667-amino-acid chain: Probable E3 ubiquitin-protein ligase HIP1 (667 aa).

Disordered regions lie at residues 142–163 (NGAS…NGQA) and 285–311 (TTAG…RSFR). Residues 288-309 (GLSSSSYDPSGGNNNSGGSQRS) show a composition bias toward low complexity. The RING-type; atypical zinc finger occupies 620–661 (CCICQEEYVDGDDLGTLDCGHDFHVGCVRQWLVVKNTCPICK).

It belongs to the RING-type zinc finger family. Interacts with HAL3.

The catalysed reaction is S-ubiquitinyl-[E2 ubiquitin-conjugating enzyme]-L-cysteine + [acceptor protein]-L-lysine = [E2 ubiquitin-conjugating enzyme]-L-cysteine + N(6)-ubiquitinyl-[acceptor protein]-L-lysine.. It functions in the pathway protein modification; protein ubiquitination. Probable E3 ubiquitin-protein ligase that functions downstream of HAL3 and is required for HAL3-regulated plant growth. Activation of HIP1 by HAL3 may lead to the degradation of cell cycle suppressors, resulting in enhancement of cell division and plant growth. This Oryza sativa subsp. japonica (Rice) protein is Probable E3 ubiquitin-protein ligase HIP1 (HIP1).